Reading from the N-terminus, the 776-residue chain is GATOR2 complex protein Wdr24 (776 aa).

WD repeat units follow at residues 63–103 (NLSY…RQKQ), 109–149 (EHER…SINT), 152–192 (CNSE…KCMV), 196–235 (AHYGPVYTCDWHPTRNWLATGSRDKQIKVWNMDGRPGLEH), 238–280 (HTIA…IPFA), and 284–326 (EHTN…ALKA). The interval 466–490 (HRSSFSNQKNPMNSRRATQVASDWP) is disordered. Residues 469–490 (SFSNQKNPMNSRRATQVASDWP) are compositionally biased toward polar residues. The C4-type zinc-finger motif lies at 703 to 726 (NCGECGRPMGGKVGWYCDKCKSMQ). Zn(2+) is bound by residues C704, C707, C719, C722, C730, C733, C744, C747, H749, H752, H755, C766, C769, H771, and C773. The RING-type; atypical zinc-finger motif lies at 728–776 (AKCCVCGLIVRGVYAWCQGCSHGGHIEHLQKYFAKHSKCPKCGHLCAYS).

This sequence belongs to the WD repeat WDR24 family. As to quaternary structure, component of the GATOR complex consisting of mio, Nup44A/Seh1, Im11, Nplr3, Nplr2, Wdr24, Wdr59 and Sec13. Within the GATOR complex, probable component of the GATOR2 subcomplex which is likely composed of mio, Nup44A/Seh1, Wdr24, Wdr59 and Sec13. Interacts with Nup44A/Seh1. Interacts with mio. Interacts with Nplr3. The GATOR2 complex associates with unmet in the absence of S-adenosyl-L-methionine; the mio-Wdr24-Nup44A subcomplex is essential and sufficient for this interaction while Wdr59 and Sec13 are dispensable. This association acts as a nutrient sensor to inhibit mTORC1 signaling in the absence of methionine.

Its subcellular location is the lysosome. It is found in the cytoplasmic vesicle. The protein resides in the autophagosome. It catalyses the reaction S-ubiquitinyl-[E2 ubiquitin-conjugating enzyme]-L-cysteine + [acceptor protein]-L-lysine = [E2 ubiquitin-conjugating enzyme]-L-cysteine + N(6)-ubiquitinyl-[acceptor protein]-L-lysine.. Its pathway is protein modification; protein ubiquitination. An essential component of the GATOR subcomplex GATOR2 which functions as an activator of the amino acid-sensing branch of the mTORC1 signaling pathway. The two GATOR subcomplexes, GATOR1 and GATOR2, regulate the mTORC1 pathway in order to mediate metabolic homeostasis, female gametogenesis and the response to amino acid limitation and complete starvation. GATOR2 activates the mTORC1 signaling pathway through the inhibition of the GATOR1 subcomplex, controlling the switch to cell proliferation and growth under nutrient replete conditions and during female oocyte development. GATOR2 probably acts as an E3 ubiquitin-protein ligase toward GATOR1. In the presence of abundant amino acids, the GATOR2 complex mediates ubiquitination of components of the GATOR1 complex, leading to GATOR1 inactivation. This GATOR2 component is required for activating mTORC1 and promoting cell growth in both germline and somatic cells. In addition to its role in regulation of the mTORC1 complex, functions independently of mTORC1 to promote the acidification of lysosomes and facilitates autophagic flux. The polypeptide is GATOR2 complex protein Wdr24 (Drosophila melanogaster (Fruit fly)).